The following is a 388-amino-acid chain: Succinate--CoA ligase [ADP-forming] subunit beta (388 aa).

One can recognise an ATP-grasp domain in the interval 9-244; it reads KQLFARYGLP…QSQEDPREAQ (236 aa). ATP is bound by residues K46, 53–55, E99, T102, and E107; that span reads GRG. Mg(2+) is bound by residues N199 and D213. Substrate-binding positions include N264 and 321–323; that span reads GIV.

Belongs to the succinate/malate CoA ligase beta subunit family. In terms of assembly, heterotetramer of two alpha and two beta subunits. The cofactor is Mg(2+).

It catalyses the reaction succinate + ATP + CoA = succinyl-CoA + ADP + phosphate. The catalysed reaction is GTP + succinate + CoA = succinyl-CoA + GDP + phosphate. Its pathway is carbohydrate metabolism; tricarboxylic acid cycle; succinate from succinyl-CoA (ligase route): step 1/1. Its function is as follows. Succinyl-CoA synthetase functions in the citric acid cycle (TCA), coupling the hydrolysis of succinyl-CoA to the synthesis of either ATP or GTP and thus represents the only step of substrate-level phosphorylation in the TCA. The beta subunit provides nucleotide specificity of the enzyme and binds the substrate succinate, while the binding sites for coenzyme A and phosphate are found in the alpha subunit. The protein is Succinate--CoA ligase [ADP-forming] subunit beta of Escherichia coli O139:H28 (strain E24377A / ETEC).